A 174-amino-acid polypeptide reads, in one-letter code: UPF0336 protein MAP_3996c (174 aa).

A MaoC-like domain is found at 11-131 (IGSHYRAPDY…VLAEIRSEVT (121 aa)).

This sequence belongs to the UPF0336 family.

The sequence is that of UPF0336 protein MAP_3996c from Mycolicibacterium paratuberculosis (strain ATCC BAA-968 / K-10) (Mycobacterium paratuberculosis).